Consider the following 394-residue polypeptide: Elongation factor Tu (394 aa).

The 195-residue stretch at 10 to 204 (KPHVNVGTIG…AVDEWIPTPT (195 aa)) folds into the tr-type G domain. Residues 19–26 (GHIDHGKT) are G1. 19 to 26 (GHIDHGKT) lines the GTP pocket. Residue Thr26 participates in Mg(2+) binding. Residues 60–64 (GITIN) form a G2 region. Residues 81–84 (DCPG) are G3. GTP-binding positions include 81 to 85 (DCPGH) and 136 to 139 (NKCD). The segment at 136–139 (NKCD) is G4. Positions 174-176 (SAL) are G5.

This sequence belongs to the TRAFAC class translation factor GTPase superfamily. Classic translation factor GTPase family. EF-Tu/EF-1A subfamily. Monomer.

The protein resides in the cytoplasm. The enzyme catalyses GTP + H2O = GDP + phosphate + H(+). GTP hydrolase that promotes the GTP-dependent binding of aminoacyl-tRNA to the A-site of ribosomes during protein biosynthesis. This Mycoplasma genitalium (strain ATCC 33530 / DSM 19775 / NCTC 10195 / G37) (Mycoplasmoides genitalium) protein is Elongation factor Tu.